Here is a 1203-residue protein sequence, read N- to C-terminus: Probable phospholipid-transporting ATPase 11 (1203 aa).

Over 1 to 71 the chain is Cytoplasmic; that stretch reads MTKCRRRRLH…STKYTLASFI (71 aa). A helical membrane pass occupies residues 72-93; sequence PKSLFEQFRRVANFYFLVTGVL. Residues 94–97 lie on the Extracellular side of the membrane; it reads SLTA. Residues 98–120 traverse the membrane as a helical segment; that stretch reads LSPYSPISALLPLTFVIAASMVK. Topologically, residues 121–303 are cytoplasmic; the sequence is EAIEDWGRKK…SRIERKMDKI (183 aa). A helical membrane pass occupies residues 304-325; sequence IYLMFGVVFLMSFIGSIVFGIE. Over 326-363 the chain is Extracellular; the sequence is TREDRVRNGGRTERWYLRPDNADIFFDPDRAPMAAVYH. Residues 364–381 form a helical membrane-spanning segment; it reads FFTAVMLYSYFIPISLYV. Over 382 to 921 the chain is Cytoplasmic; that stretch reads SIEIVKVLQS…HGHWCYSRIS (540 aa). Catalysis depends on Asp-429, which acts as the 4-aspartylphosphate intermediate. Residues Asp-866 and Asp-870 each contribute to the Mg(2+) site. A helical transmembrane segment spans residues 922-941; sequence SMICYFFYKNITFGVTVFLY. Over 942–955 the chain is Extracellular; it reads EAYTSFSAQPAYND. Residues 956–975 traverse the membrane as a helical segment; sequence WFLSLFNVFFSSLPVIALGV. Topologically, residues 976 to 1005 are cytoplasmic; it reads FDQDVSARYCYKFPLLYQEGVQNLLFSWKR. The helical transmembrane segment at 1006-1028 threads the bilayer; it reads IIGWMFNGVFTALAIFFLCKESL. The Extracellular portion of the chain corresponds to 1029–1041; sequence KHQLYNPNGKTAG. Residues 1042-1064 form a helical membrane-spanning segment; sequence REILGGTMYTCVVWVVNLQMALA. Residues 1065–1070 lie on the Cytoplasmic side of the membrane; it reads ISYFTW. A helical transmembrane segment spans residues 1071–1091; that stretch reads LQHIVIWGSVAFWYIFLMIYG. Residues 1092-1108 are Extracellular-facing; the sequence is AITPSFSTDAYKVFIEA. A helical transmembrane segment spans residues 1109 to 1133; sequence LAPAPSYWLTTLFVMFFALIPFFVF. At 1134–1203 the chain is on the cytoplasmic side; it reads KSVQMRFFPG…DQLNKNFIAF (70 aa).

This sequence belongs to the cation transport ATPase (P-type) (TC 3.A.3) family. Type IV subfamily.

The protein localises to the membrane. It catalyses the reaction ATP + H2O + phospholipidSide 1 = ADP + phosphate + phospholipidSide 2.. Functionally, involved in transport of phospholipids. The sequence is that of Probable phospholipid-transporting ATPase 11 from Arabidopsis thaliana (Mouse-ear cress).